Here is a 237-residue protein sequence, read N- to C-terminus: Mitochondrial inner membrane protease atp23 (237 aa).

Polar residues predominate over residues 1-18 (MSTSESSNNGSQPGNQDT). The segment at 1-24 (MSTSESSNNGSQPGNQDTGYIPGD) is disordered. H136 is a binding site for a divalent metal cation. The active site involves E137. H140 is an a divalent metal cation binding site.

The protein belongs to the peptidase M76 family.

Its subcellular location is the mitochondrion inner membrane. In terms of biological role, has a dual role in the assembly of mitochondrial ATPase. Acts as a protease that removes N-terminal residues of mitochondrial ATPase CF(0) subunit 6 at the intermembrane space side. Also involved in the correct assembly of the membrane-embedded ATPase CF(0) particle, probably mediating association of subunit 6 with the subunit 9 ring. The chain is Mitochondrial inner membrane protease atp23 (atp23) from Aspergillus niger (strain ATCC MYA-4892 / CBS 513.88 / FGSC A1513).